Here is a 375-residue protein sequence, read N- to C-terminus: MFNIIKNDKNSNARLGILELPHGNVATPCFMPVGTLGVMKALKHDVLEKLGCDLMLANTYHLYLRPGIDVIKKYGNLHNFTTWNKNFLTDSGGFQVFSLSNFRKIEDEGVDFKSHIDGSRHYFTPESVFSMQETFESDIIMALDICSPYGIDYDEASLYTNITTSWARRTLCAYKNRKEGYEGLLFLITQGNFFKDLRKRSTESILELNSPGIAIGGISVGEPRDRYLEILEYNSSLIPKDKPKYVMGIGTPHYILDAIYNGIDIFDCVNPTRIARHGSLLTDNGILRINRAEFRFDTCSVERECSCTLCTRYSRGYLRHLFKSEEALGVMLASEHNIHYMFRLINKAKNAIMNDNFVKFRKLYLDKYDEGNLNE.

Residue Asp-90 is the Proton acceptor of the active site. Residues 90–94 (DSGGF), Asp-144, Gln-190, and Gly-217 each bind substrate. The RNA binding stretch occupies residues 248–254 (GIGTPHY). Catalysis depends on Asp-267, which acts as the Nucleophile. Residues 272-276 (TRIAR) form an RNA binding; important for wobble base 34 recognition region. Zn(2+) contacts are provided by Cys-305, Cys-307, Cys-310, and His-336.

The protein belongs to the queuine tRNA-ribosyltransferase family. Homodimer. Within each dimer, one monomer is responsible for RNA recognition and catalysis, while the other monomer binds to the replacement base PreQ1. Requires Zn(2+) as cofactor.

The enzyme catalyses 7-aminomethyl-7-carbaguanine + guanosine(34) in tRNA = 7-aminomethyl-7-carbaguanosine(34) in tRNA + guanine. Its pathway is tRNA modification; tRNA-queuosine biosynthesis. In terms of biological role, catalyzes the base-exchange of a guanine (G) residue with the queuine precursor 7-aminomethyl-7-deazaguanine (PreQ1) at position 34 (anticodon wobble position) in tRNAs with GU(N) anticodons (tRNA-Asp, -Asn, -His and -Tyr). Catalysis occurs through a double-displacement mechanism. The nucleophile active site attacks the C1' of nucleotide 34 to detach the guanine base from the RNA, forming a covalent enzyme-RNA intermediate. The proton acceptor active site deprotonates the incoming PreQ1, allowing a nucleophilic attack on the C1' of the ribose to form the product. After dissociation, two additional enzymatic reactions on the tRNA convert PreQ1 to queuine (Q), resulting in the hypermodified nucleoside queuosine (7-(((4,5-cis-dihydroxy-2-cyclopenten-1-yl)amino)methyl)-7-deazaguanosine). The protein is Queuine tRNA-ribosyltransferase of Borrelia duttonii (strain Ly).